Reading from the N-terminus, the 483-residue chain is Cobyric acid synthase (483 aa).

Positions 252–439 (KLNVVVPVLT…LHGFFDEAEA (188 aa)) constitute a GATase cobBQ-type domain. The Nucleophile role is filled by Cys333. His431 is a catalytic residue.

This sequence belongs to the CobB/CobQ family. CobQ subfamily.

It functions in the pathway cofactor biosynthesis; adenosylcobalamin biosynthesis. Functionally, catalyzes amidations at positions B, D, E, and G on adenosylcobyrinic A,C-diamide. NH(2) groups are provided by glutamine, and one molecule of ATP is hydrogenolyzed for each amidation. In Vibrio parahaemolyticus serotype O3:K6 (strain RIMD 2210633), this protein is Cobyric acid synthase.